Here is a 309-residue protein sequence, read N- to C-terminus: Zinc finger protein-like 1 homolog (309 aa).

Residues 1–43 (MGLCKCPKRKVTNLFCYEHRVNVCEFCLVDNHPNCVVQSYLTW) form a B box-type; degenerate zinc finger. The RING-type; atypical zinc-finger motif lies at 53 to 101 (CSLCKTTLAEGDTIRLNCLHLLHWKCFDEWAANFPATTAPAGYRCPCCS). Residues 200–221 (GAESSSDTRPLLQLRDADNEEN) form a disordered region. Residues 254-274 (KIALFVIFLAVLALITIIMVM) traverse the membrane as a helical segment.

It belongs to the ZFPL1 family.

It is found in the membrane. The polypeptide is Zinc finger protein-like 1 homolog (Caenorhabditis elegans).